The primary structure comprises 949 residues: Piwi-like protein 2 (949 aa).

The segment at 1 to 125 (MDPTRPPFRG…SLSTRVQQAS (125 aa)) is disordered. The span at 115–125 (PSLSTRVQQAS) shows a compositional bias: polar residues. A PAZ domain is found at 366-478 (SVLDIMNILY…LLPELAFMTG (113 aa)). The Piwi domain maps to 644-935 (LLVCLISGTR…LAFLSGQFLH (292 aa)). Catalysis depends on residues Asp-721, Glu-759, Asp-791, and His-924.

Belongs to the argonaute family. Piwi subfamily. Component of the PET complex. Mg(2+) is required as a cofactor. In terms of processing, methylated on arginine residues; required for the interaction with Tudor domain-containing protein and subsequent localization to the meiotic nuage, also named P granule. Expressed in oocytes, testis and liver (at protein level).

Its subcellular location is the cytoplasm. It localises to the nucleus. Endoribonuclease that plays a central role during spermatogenesis by repressing transposable elements and preventing their mobilization, which is essential for the germline integrity. Plays an essential role in meiotic differentiation of spermatocytes, germ cell differentiation and in self-renewal of spermatogonial stem cells. Acts via the piRNA metabolic process, which mediates the repression of transposable elements during meiosis by forming complexes composed of piRNAs and Piwi proteins and govern the methylation and subsequent repression of transposons. During piRNA biosynthesis, plays a key role in the piRNA amplification loop, also named ping-pong amplification cycle, by acting as a 'slicer-competent' piRNA endoribonuclease that cleaves primary piRNAs, which are then loaded onto 'slicer-incompetent' piwil4. Piwil2 slicing produces a pre-miRNA intermediate, which is then processed in mature piRNAs, and as well as a 16 nucleotide by-product that is degraded. Required for piwil4/miwi2 nuclear localization and association with secondary piRNAs antisense. Represses circadian rhythms by promoting the stability and activity of core clock components BMAL1 and CLOCK. The protein is Piwi-like protein 2 (piwil2) of Xenopus tropicalis (Western clawed frog).